The sequence spans 338 residues: Aspartate-semialdehyde dehydrogenase (338 aa).

Residues 9 to 12 (TGQV) and 37 to 38 (RS) contribute to the NADP(+) site. Arg93 contacts phosphate. Cys123 (acyl-thioester intermediate) is an active-site residue. Gln150 is a substrate binding site. 153–154 (SG) contributes to the NADP(+) binding site. Residue Lys220 participates in phosphate binding. Substrate is bound at residue Arg242. His249 functions as the Proton acceptor in the catalytic mechanism. Asn316 serves as a coordination point for NADP(+).

Belongs to the aspartate-semialdehyde dehydrogenase family. As to quaternary structure, homodimer.

It catalyses the reaction L-aspartate 4-semialdehyde + phosphate + NADP(+) = 4-phospho-L-aspartate + NADPH + H(+). The protein operates within amino-acid biosynthesis; L-lysine biosynthesis via DAP pathway; (S)-tetrahydrodipicolinate from L-aspartate: step 2/4. It functions in the pathway amino-acid biosynthesis; L-methionine biosynthesis via de novo pathway; L-homoserine from L-aspartate: step 2/3. Its pathway is amino-acid biosynthesis; L-threonine biosynthesis; L-threonine from L-aspartate: step 2/5. Its function is as follows. Catalyzes the NADPH-dependent formation of L-aspartate-semialdehyde (L-ASA) by the reductive dephosphorylation of L-aspartyl-4-phosphate. The sequence is that of Aspartate-semialdehyde dehydrogenase from Streptomyces akiyoshiensis.